A 480-amino-acid chain; its full sequence is Probable WRKY transcription factor 61 (480 aa).

The interval asparagine 30–serine 108 is disordered. Composition is skewed to basic and acidic residues over residues arginine 57–leucine 66 and asparagine 84–lysine 106. Residues cysteine 185–proline 251 constitute a DNA-binding region (WRKY).

The protein localises to the nucleus. In terms of biological role, transcription factor. Interacts specifically with the W box (5'-(T)TGAC[CT]-3'), a frequently occurring elicitor-responsive cis-acting element. This is Probable WRKY transcription factor 61 (WRKY61) from Arabidopsis thaliana (Mouse-ear cress).